We begin with the raw amino-acid sequence, 222 residues long: 3-dehydroquinate dehydratase (222 aa).

Residues 29–31 (ELR) and R55 contribute to the 3-dehydroquinate site. The active-site Proton donor/acceptor is H112. K139 functions as the Schiff-base intermediate with substrate in the catalytic mechanism. Residues R178, S199, and Q203 each coordinate 3-dehydroquinate.

It belongs to the type-I 3-dehydroquinase family. As to quaternary structure, homodimer.

The catalysed reaction is 3-dehydroquinate = 3-dehydroshikimate + H2O. It functions in the pathway metabolic intermediate biosynthesis; chorismate biosynthesis; chorismate from D-erythrose 4-phosphate and phosphoenolpyruvate: step 3/7. Functionally, involved in the third step of the chorismate pathway, which leads to the biosynthesis of aromatic amino acids. Catalyzes the cis-dehydration of 3-dehydroquinate (DHQ) and introduces the first double bond of the aromatic ring to yield 3-dehydroshikimate. The sequence is that of 3-dehydroquinate dehydratase from Dehalococcoides mccartyi (strain ATCC BAA-2266 / KCTC 15142 / 195) (Dehalococcoides ethenogenes (strain 195)).